Consider the following 125-residue polypeptide: Antitoxin MazE5 (125 aa).

As to quaternary structure, forms a complex with cognate toxin MazF5.

Functionally, antitoxin component of a type II toxin-antitoxin (TA) system. Upon expression in M.smegmatis neutralizes the effect of cognate toxin MazF5. In Mycobacterium tuberculosis (strain ATCC 25618 / H37Rv), this protein is Antitoxin MazE5 (mazE5).